A 189-amino-acid chain; its full sequence is GTP cyclohydrolase 1 (189 aa).

Residues Cys78, His81, and Cys150 each contribute to the Zn(2+) site.

Belongs to the GTP cyclohydrolase I family. In terms of assembly, homomer.

The enzyme catalyses GTP + H2O = 7,8-dihydroneopterin 3'-triphosphate + formate + H(+). Its pathway is cofactor biosynthesis; 7,8-dihydroneopterin triphosphate biosynthesis; 7,8-dihydroneopterin triphosphate from GTP: step 1/1. In Listeria monocytogenes serotype 4a (strain HCC23), this protein is GTP cyclohydrolase 1.